A 634-amino-acid polypeptide reads, in one-letter code: Chaperone protein HtpG (634 aa).

An a; substrate-binding region spans residues 1–342 (MSVETQKETL…SNDLSLNVSR (342 aa)). Positions 343–559 (EILQKDPVID…EQDLGLQMRQ (217 aa)) are b. A c region spans residues 560–634 (ILEASGQKVP…LNKLLVELSA (75 aa)).

Belongs to the heat shock protein 90 family. In terms of assembly, homodimer.

It is found in the cytoplasm. Its function is as follows. Molecular chaperone. Has ATPase activity. The chain is Chaperone protein HtpG from Pseudomonas aeruginosa (strain ATCC 15692 / DSM 22644 / CIP 104116 / JCM 14847 / LMG 12228 / 1C / PRS 101 / PAO1).